We begin with the raw amino-acid sequence, 90 residues long: Cell division topological specificity factor (90 aa).

Belongs to the MinE family.

In terms of biological role, prevents the cell division inhibition by proteins MinC and MinD at internal division sites while permitting inhibition at polar sites. This ensures cell division at the proper site by restricting the formation of a division septum at the midpoint of the long axis of the cell. This is Cell division topological specificity factor from Pelotomaculum thermopropionicum (strain DSM 13744 / JCM 10971 / SI).